The following is a 462-amino-acid chain: Exodeoxyribonuclease 7 large subunit (462 aa).

The protein belongs to the XseA family. As to quaternary structure, heterooligomer composed of large and small subunits.

It localises to the cytoplasm. The catalysed reaction is Exonucleolytic cleavage in either 5'- to 3'- or 3'- to 5'-direction to yield nucleoside 5'-phosphates.. Its function is as follows. Bidirectionally degrades single-stranded DNA into large acid-insoluble oligonucleotides, which are then degraded further into small acid-soluble oligonucleotides. This is Exodeoxyribonuclease 7 large subunit from Proteus mirabilis (strain HI4320).